We begin with the raw amino-acid sequence, 310 residues long: Ribosomal RNA small subunit methyltransferase H (310 aa).

S-adenosyl-L-methionine contacts are provided by residues 32–34, D52, F79, D100, and Q107; that span reads GGH.

It belongs to the methyltransferase superfamily. RsmH family.

Its subcellular location is the cytoplasm. It carries out the reaction cytidine(1402) in 16S rRNA + S-adenosyl-L-methionine = N(4)-methylcytidine(1402) in 16S rRNA + S-adenosyl-L-homocysteine + H(+). In terms of biological role, specifically methylates the N4 position of cytidine in position 1402 (C1402) of 16S rRNA. The chain is Ribosomal RNA small subunit methyltransferase H from Geobacillus thermodenitrificans (strain NG80-2).